Reading from the N-terminus, the 213-residue chain is ATP phosphoribosyltransferase (213 aa).

It belongs to the ATP phosphoribosyltransferase family. Short subfamily. As to quaternary structure, heteromultimer composed of HisG and HisZ subunits.

The protein resides in the cytoplasm. It catalyses the reaction 1-(5-phospho-beta-D-ribosyl)-ATP + diphosphate = 5-phospho-alpha-D-ribose 1-diphosphate + ATP. It functions in the pathway amino-acid biosynthesis; L-histidine biosynthesis; L-histidine from 5-phospho-alpha-D-ribose 1-diphosphate: step 1/9. Catalyzes the condensation of ATP and 5-phosphoribose 1-diphosphate to form N'-(5'-phosphoribosyl)-ATP (PR-ATP). Has a crucial role in the pathway because the rate of histidine biosynthesis seems to be controlled primarily by regulation of HisG enzymatic activity. In Listeria monocytogenes serovar 1/2a (strain ATCC BAA-679 / EGD-e), this protein is ATP phosphoribosyltransferase (hisG).